Here is a 207-residue protein sequence, read N- to C-terminus: ATP synthase subunit delta (207 aa).

The protein belongs to the ATPase delta chain family. In terms of assembly, F-type ATPases have 2 components, F(1) - the catalytic core - and F(0) - the membrane proton channel. F(1) has five subunits: alpha(3), beta(3), gamma(1), delta(1), epsilon(1). F(0) has three main subunits: a(1), b(2) and c(10-14). The alpha and beta chains form an alternating ring which encloses part of the gamma chain. F(1) is attached to F(0) by a central stalk formed by the gamma and epsilon chains, while a peripheral stalk is formed by the delta and b chains.

The protein localises to the cell inner membrane. F(1)F(0) ATP synthase produces ATP from ADP in the presence of a proton or sodium gradient. F-type ATPases consist of two structural domains, F(1) containing the extramembraneous catalytic core and F(0) containing the membrane proton channel, linked together by a central stalk and a peripheral stalk. During catalysis, ATP synthesis in the catalytic domain of F(1) is coupled via a rotary mechanism of the central stalk subunits to proton translocation. Functionally, this protein is part of the stalk that links CF(0) to CF(1). It either transmits conformational changes from CF(0) to CF(1) or is implicated in proton conduction. This is ATP synthase subunit delta from Psychrobacter cryohalolentis (strain ATCC BAA-1226 / DSM 17306 / VKM B-2378 / K5).